Reading from the N-terminus, the 303-residue chain is Tobamovirus multiplication protein 3 (303 aa).

Over 1–48 (MRIGGVEVTKFASEMMSSSSSSAVEMLNLKEASNWWSDVNESPIWQDR) the chain is Extracellular. Residues 49 to 69 (IFHVLAVLYGIVSLVAVIQLV) form a helical membrane-spanning segment. The Cytoplasmic segment spans residues 70–82 (RIQLRVPEYGWTT). Residues 83 to 103 (QKVFHFLNFVVNGVRAVVFVF) form a helical membrane-spanning segment. The Extracellular portion of the chain corresponds to 104–117 (RRNVQFMQPEILQH). Residues 118–138 (ILLDIPSLAFFTTYALLVLFW) traverse the membrane as a helical segment. Topologically, residues 139 to 156 (AEIYYQARAVSTDGLRPS) are cytoplasmic. The chain crosses the membrane as a helical span at residues 157–177 (FFTINAVVYVVQIALWLVLWW). The Extracellular segment spans residues 178–183 (KPVRVM). The chain crosses the membrane as a helical span at residues 184 to 204 (VILSKMFFAGVSLFAALGFLL). Over 205-232 (YGGRLFLMLQRFPVESKGRRKKLQEVGY) the chain is Cytoplasmic. Residues 233-253 (VTTICFTCFLIRCIMMCFAAF) traverse the membrane as a helical segment. The Extracellular portion of the chain corresponds to 254–265 (DEGANLDVLDHP). A helical membrane pass occupies residues 266-286 (ILNFIYYLLVEILPSSLVLFI). Residues 287–303 (LRKLPPKRGITQYHQIR) lie on the Cytoplasmic side of the membrane.

It belongs to the plant tobamovirus multiplication TOM1 protein family. As to quaternary structure, constituent of tobamovirus replication complex. Interacts with the helicase domain of tobamovirus-encoded replication proteins.

It localises to the vacuole membrane. Functionally, contributes to the intracellular multiplication of tobamoviruses, probably being a membrane anchor promoting the formation of the replication complex. This chain is Tobamovirus multiplication protein 3 (TOM3), found in Arabidopsis thaliana (Mouse-ear cress).